The following is a 397-amino-acid chain: 2-aminoadipate transaminase (397 aa).

Substrate is bound at residue Gly-40. Residues Tyr-70, 100-101 (SQ), Asn-174, 202-205 (DDAY), 235-237 (SFS), and Arg-245 each bind pyridoxal 5'-phosphate. Residue Asn-174 participates in substrate binding. Lys-263 is subject to N6-(pyridoxal phosphate)lysine. Arg-368 contributes to the substrate binding site.

This sequence belongs to the class-I pyridoxal-phosphate-dependent aminotransferase family. In terms of assembly, homodimer. It depends on pyridoxal 5'-phosphate as a cofactor.

It carries out the reaction L-2-aminoadipate + 2-oxoglutarate = 2-oxoadipate + L-glutamate. Its pathway is amino-acid biosynthesis; L-lysine biosynthesis via AAA pathway; L-alpha-aminoadipate from 2-oxoglutarate: step 5/5. In terms of biological role, catalyzes the transfer of an amino group between 2-oxoadipate (2-OA) and glutamate (Glu) to yield alpha-aminodipate (AAA). It can also transaminate glutamate, leucine, and aromatic amino acids. It also contributes in the biosynthesis of other amino acids such as leucine. The protein is 2-aminoadipate transaminase (lysN) of Thermus thermophilus (strain ATCC BAA-163 / DSM 7039 / HB27).